The chain runs to 602 residues: Elongation factor 4 (602 aa).

The tr-type G domain maps to 7 to 189 (SKIRNFCIIA…AIVRRVPAPQ (183 aa)). Residues 19–24 (DHGKST) and 136–139 (NKVD) each bind GTP.

The protein belongs to the TRAFAC class translation factor GTPase superfamily. Classic translation factor GTPase family. LepA subfamily.

It localises to the cell inner membrane. The catalysed reaction is GTP + H2O = GDP + phosphate + H(+). Required for accurate and efficient protein synthesis under certain stress conditions. May act as a fidelity factor of the translation reaction, by catalyzing a one-codon backward translocation of tRNAs on improperly translocated ribosomes. Back-translocation proceeds from a post-translocation (POST) complex to a pre-translocation (PRE) complex, thus giving elongation factor G a second chance to translocate the tRNAs correctly. Binds to ribosomes in a GTP-dependent manner. This Prochlorococcus marinus (strain MIT 9312) protein is Elongation factor 4.